A 283-amino-acid chain; its full sequence is Protein-S-isoprenylcysteine O-methyltransferase (283 aa).

The Cytoplasmic portion of the chain corresponds to 1–15 (MAAARRGSAGSEARL). The chain crosses the membrane as a helical span at residues 16 to 32 (SLATFLLGASVLALPLL). Topologically, residues 33–40 (TRAGLQGR) are lumenal. A helical membrane pass occupies residues 41-58 (TGLALYVAGLNALLLLLY). The Cytoplasmic portion of the chain corresponds to 59-68 (RPPRYQIAIR). A helical transmembrane segment spans residues 69–86 (ACFLGFVFGCGVLLSFSQ). Over 87-91 (SSWNH) the chain is Lumenal. The helical transmembrane segment at 92 to 111 (FGWYVCSLSLFHYSEYLVTA) threads the bilayer. The Cytoplasmic segment spans residues 112–130 (VNNPKSLSLDSFLLNHSLE). Residues 131 to 148 (YTVAALSSWIEFTLENIF) form a helical membrane-spanning segment. At 149–153 (WPELK) the chain is on the lumenal side. Residues 154–173 (QITWLSATGLLMVVFGECLR) traverse the membrane as a helical segment. At 174–211 (KAAMFTAGSNFNHVVQSEKSDTHTLVTSGVYAWCRHPS) the chain is on the cytoplasmic side. Residues Gln-189, 196 to 199 (HTLV), Tyr-204, and 209 to 212 (HPSY) contribute to the S-adenosyl-L-methionine site. The helical transmembrane segment at 212 to 227 (YVGWFYWSIGTQVMLC) threads the bilayer. A topological domain (lumenal) is located at residue Asn-228. A helical transmembrane segment spans residues 229–243 (PICGVVYALTVWRFF). The Cytoplasmic portion of the chain corresponds to 244–283 (RDRTEEEEISLIHFFGEEYLDYKKRVPTGLPFIKGVKVEL). Arg-246 contacts substrate. Glu-250 provides a ligand contact to S-adenosyl-L-methionine.

Belongs to the class VI-like SAM-binding methyltransferase superfamily. Isoprenylcysteine carboxyl methyltransferase family. As to expression, highly enriched in adult cerebellum, with a low level expression in other brain regions.

Its subcellular location is the endoplasmic reticulum membrane. The enzyme catalyses [protein]-C-terminal S-[(2E,6E)-farnesyl]-L-cysteine + S-adenosyl-L-methionine = [protein]-C-terminal S-[(2E,6E)-farnesyl]-L-cysteine methyl ester + S-adenosyl-L-homocysteine. Its function is as follows. Catalyzes the post-translational methylation of isoprenylated C-terminal cysteine residues. The polypeptide is Protein-S-isoprenylcysteine O-methyltransferase (Icmt) (Mus musculus (Mouse)).